Here is a 425-residue protein sequence, read N- to C-terminus: Glucose-6-phosphate 1-dehydrogenase (425 aa).

The NADP(+) site is built by arginine 44 and lysine 135. Substrate-binding residues include histidine 165, lysine 169, glutamate 201, and aspartate 220. Histidine 225 serves as the catalytic Proton acceptor. Lysine 311 is a binding site for substrate.

The protein belongs to the glucose-6-phosphate dehydrogenase family.

It catalyses the reaction D-glucose 6-phosphate + NADP(+) = 6-phospho-D-glucono-1,5-lactone + NADPH + H(+). It participates in carbohydrate degradation; pentose phosphate pathway; D-ribulose 5-phosphate from D-glucose 6-phosphate (oxidative stage): step 1/3. Catalyzes the oxidation of glucose 6-phosphate to 6-phosphogluconolactone. The polypeptide is Glucose-6-phosphate 1-dehydrogenase (Helicobacter pylori (strain J99 / ATCC 700824) (Campylobacter pylori J99)).